The sequence spans 425 residues: Dihydroorotase (425 aa).

Zn(2+) contacts are provided by H60 and H62. Substrate contacts are provided by residues 62 to 64 and N94; that span reads HLR. Zn(2+) contacts are provided by D152, H179, and H232. N278 serves as a coordination point for substrate. Position 305 (D305) interacts with Zn(2+). D305 is a catalytic residue. H309 is a substrate binding site.

It belongs to the metallo-dependent hydrolases superfamily. DHOase family. Class I DHOase subfamily. The cofactor is Zn(2+).

It catalyses the reaction (S)-dihydroorotate + H2O = N-carbamoyl-L-aspartate + H(+). Its pathway is pyrimidine metabolism; UMP biosynthesis via de novo pathway; (S)-dihydroorotate from bicarbonate: step 3/3. Its function is as follows. Catalyzes the reversible cyclization of carbamoyl aspartate to dihydroorotate. In Syntrophotalea carbinolica (strain DSM 2380 / NBRC 103641 / GraBd1) (Pelobacter carbinolicus), this protein is Dihydroorotase.